We begin with the raw amino-acid sequence, 541 residues long: Glutamyl-tRNA(Gln) amidotransferase subunit B, mitochondrial (541 aa).

This sequence belongs to the GatB/GatE family. GatB subfamily. As to quaternary structure, subunit of the heterotrimeric GatFAB amidotransferase (AdT) complex, composed of A, B and F subunits.

The protein resides in the mitochondrion. It carries out the reaction L-glutamyl-tRNA(Gln) + L-glutamine + ATP + H2O = L-glutaminyl-tRNA(Gln) + L-glutamate + ADP + phosphate + H(+). In terms of biological role, allows the formation of correctly charged Gln-tRNA(Gln) through the transamidation of misacylated Glu-tRNA(Gln) in the mitochondria. The reaction takes place in the presence of glutamine and ATP through an activated gamma-phospho-Glu-tRNA(Gln). This is Glutamyl-tRNA(Gln) amidotransferase subunit B, mitochondrial from Saccharomyces cerevisiae (strain YJM789) (Baker's yeast).